A 353-amino-acid polypeptide reads, in one-letter code: MTQRKIIHVDCDCFYAAIEMRDDPSLAGKPLAVGGSADRRGVIATCNYEARAYGVRSAMSSGHALKLCPDLTIVKPRMDAYREASKEIHTIFSDYTDLIEPLSLDEAYLDVSDSAHFGGSATRIAQDIRRRVSNQLHITVSAGVAPNKFLAKIASDWRKPNGLFVITPDQVEEFVSGLPVSKLHGVGKVTADKLGKLGINDCLQLREWDKLALVREFGSFGERLWSLARGIDERLVHNDSRRQSISVENTYDVDLPDLRSCLDKLPELLETLKTRMARIDSSYRPGKPFVKVKFHDFTQTTLEQAGAGRDLGSYQLMLTQAFNRGGKPVRLLGVGVRLEDLRGGFEQMELFER.

The UmuC domain occupies 6–187 (IIHVDCDCFY…LPVSKLHGVG (182 aa)). Mg(2+) is bound by residues aspartate 10 and aspartate 105. The active site involves glutamate 106.

Belongs to the DNA polymerase type-Y family. As to quaternary structure, monomer. It depends on Mg(2+) as a cofactor.

It localises to the cytoplasm. It catalyses the reaction DNA(n) + a 2'-deoxyribonucleoside 5'-triphosphate = DNA(n+1) + diphosphate. Its function is as follows. Poorly processive, error-prone DNA polymerase involved in untargeted mutagenesis. Copies undamaged DNA at stalled replication forks, which arise in vivo from mismatched or misaligned primer ends. These misaligned primers can be extended by PolIV. Exhibits no 3'-5' exonuclease (proofreading) activity. May be involved in translesional synthesis, in conjunction with the beta clamp from PolIII. The chain is DNA polymerase IV from Pseudomonas fluorescens (strain Pf0-1).